A 558-amino-acid polypeptide reads, in one-letter code: Ribonuclease Y (558 aa).

The helical transmembrane segment at 3–23 (VLSILLILVAVGVGIFVGRQF) threads the bilayer. The KH domain maps to 248–311 (TTTTVELPSN…EIAKEALQRL (64 aa)). The HD domain maps to 374-467 (VLLHSKEVAY…VCAADALSAA (94 aa)).

Belongs to the RNase Y family.

The protein localises to the cell membrane. Endoribonuclease that initiates mRNA decay. The polypeptide is Ribonuclease Y (Aquifex aeolicus (strain VF5)).